Consider the following 345-residue polypeptide: Protein RecA (345 aa).

Residue Gly65 to Thr72 coordinates ATP.

This sequence belongs to the RecA family.

It is found in the cytoplasm. Functionally, can catalyze the hydrolysis of ATP in the presence of single-stranded DNA, the ATP-dependent uptake of single-stranded DNA by duplex DNA, and the ATP-dependent hybridization of homologous single-stranded DNAs. It interacts with LexA causing its activation and leading to its autocatalytic cleavage. This Campylobacter fetus subsp. fetus (strain 82-40) protein is Protein RecA.